The sequence spans 179 residues: ATP synthase subunit delta 2 (179 aa).

It belongs to the ATPase delta chain family. As to quaternary structure, F-type ATPases have 2 components, F(1) - the catalytic core - and F(0) - the membrane proton channel. F(1) has five subunits: alpha(3), beta(3), gamma(1), delta(1), epsilon(1). F(0) has three main subunits: a(1), b(2) and c(10-14). The alpha and beta chains form an alternating ring which encloses part of the gamma chain. F(1) is attached to F(0) by a central stalk formed by the gamma and epsilon chains, while a peripheral stalk is formed by the delta and b chains.

It localises to the cell inner membrane. Its function is as follows. F(1)F(0) ATP synthase produces ATP from ADP in the presence of a proton or sodium gradient. F-type ATPases consist of two structural domains, F(1) containing the extramembraneous catalytic core and F(0) containing the membrane proton channel, linked together by a central stalk and a peripheral stalk. During catalysis, ATP synthesis in the catalytic domain of F(1) is coupled via a rotary mechanism of the central stalk subunits to proton translocation. Functionally, this protein is part of the stalk that links CF(0) to CF(1). It either transmits conformational changes from CF(0) to CF(1) or is implicated in proton conduction. This is ATP synthase subunit delta 2 from Syntrophotalea carbinolica (strain DSM 2380 / NBRC 103641 / GraBd1) (Pelobacter carbinolicus).